Reading from the N-terminus, the 476-residue chain is tRNA(Ile)-lysidine synthase (476 aa).

30–35 (SGGPDS) is a binding site for ATP.

Belongs to the tRNA(Ile)-lysidine synthase family.

Its subcellular location is the cytoplasm. The enzyme catalyses cytidine(34) in tRNA(Ile2) + L-lysine + ATP = lysidine(34) in tRNA(Ile2) + AMP + diphosphate + H(+). Ligates lysine onto the cytidine present at position 34 of the AUA codon-specific tRNA(Ile) that contains the anticodon CAU, in an ATP-dependent manner. Cytidine is converted to lysidine, thus changing the amino acid specificity of the tRNA from methionine to isoleucine. This Bacillus anthracis protein is tRNA(Ile)-lysidine synthase.